The following is a 512-amino-acid chain: Vacuolar protein sorting-associated protein 30 (512 aa).

Positions 294 to 511 (TNIYNESFRI…LVFCSSKLSL (218 aa)) are BARA.

This sequence belongs to the beclin family. Component of the autophagy-specific VPS34 PI3-kinase complex I composed of VPS15, VPS30, VPS34, ATG14 and ATG38; and of the VPS34 PI3-kinase complex II composed of VPS15, VPS30, VPS34 and VPS38.

Its subcellular location is the endosome membrane. The protein localises to the vacuole membrane. It is found in the preautophagosomal structure membrane. Functionally, required for cytoplasm to vacuole transport (Cvt), autophagy, nucleophagy, and mitophagy, as a part of the autophagy-specific VPS34 PI3-kinase complex I. This complex is essential to recruit the ATG8-phosphatidylinositol conjugate and the ATG12-ATG5 conjugate to the pre-autophagosomal structure. Also involved in endosome-to-Golgi retrograde transport as part of the VPS34 PI3-kinase complex II. This second complex is required for the endosome-to-Golgi retrieval of PEP1 and KEX2, and the recruitment of VPS5 and VPS7, two components of the retromer complex, to endosomal membranes (probably through the synthesis of a specific pool of phosphatidylinositol 3-phosphate recruiting the retromer to the endosomes). Required for survival and/or proliferation in kidneys but not brain. This Candida glabrata (strain ATCC 2001 / BCRC 20586 / JCM 3761 / NBRC 0622 / NRRL Y-65 / CBS 138) (Yeast) protein is Vacuolar protein sorting-associated protein 30.